The sequence spans 1215 residues: Protein benign gonial cell neoplasm (1215 aa).

Residues 407–439 form an ANK repeat; sequence TGKTAVHFASELNKANHLRLLLFMGADPYIVDL. Position 898 is a phosphothreonine (T898).

As to quaternary structure, part of a complex composed of at least mei-P26, bam, bgcn and Sxl; this complex is involved in translational repression of nanos mRNA. Interacts with bam (via C-terminus); the interaction is direct. Interacts with mei-P26; the interaction is direct and does not require bam. Weakly interacts with wh/wuho; this interaction may be required for the function or formation of the mei-P26-bgcn-bam-Sxl complex. Part of a complex composed of at least tut, bam and bgcn; complex formation does not require RNA. Interacts with tut; the interaction is indirect and is mediated by bam. As part of the bam-bgcn-tut complex associates with twin; may recruit the CCR4-NOT1 deadenylation complex to mRNA 3'UTRs to mediate post-transcriptional regulation of expression. Expressed in testis and in 5-8 germline stem cells of ovaries, immediately adjacent to terminal filament. Expressed in ovarian germline cells throughout the germarium (at protein level).

Functionally, forms a complex with tut and bam involved in 3'UTR-dependent post-transcriptional repression of several 3'-RNA processing factors, which promotes germline stem cell lineage differentiation and mitosis-to-meiosis transition. Part of a complex with bam involved in 3'-UTR-dependent translational repression of a subset of mRNAs, including those for mei-P26, nanos and shg/E-cadherin; may act as a promiscuous RNA-binding protein tethering bam to its target mRNAs. Required for regulating the progression of gonialblast cells through transit amplification and differentiation into gametes. The sequence is that of Protein benign gonial cell neoplasm from Drosophila melanogaster (Fruit fly).